Reading from the N-terminus, the 245-residue chain is 1-(5-phosphoribosyl)-5-[(5-phosphoribosylamino)methylideneamino] imidazole-4-carboxamide isomerase (245 aa).

The Proton acceptor role is filled by aspartate 8. Aspartate 129 functions as the Proton donor in the catalytic mechanism.

The protein belongs to the HisA/HisF family.

The protein localises to the cytoplasm. It catalyses the reaction 1-(5-phospho-beta-D-ribosyl)-5-[(5-phospho-beta-D-ribosylamino)methylideneamino]imidazole-4-carboxamide = 5-[(5-phospho-1-deoxy-D-ribulos-1-ylimino)methylamino]-1-(5-phospho-beta-D-ribosyl)imidazole-4-carboxamide. Its pathway is amino-acid biosynthesis; L-histidine biosynthesis; L-histidine from 5-phospho-alpha-D-ribose 1-diphosphate: step 4/9. The chain is 1-(5-phosphoribosyl)-5-[(5-phosphoribosylamino)methylideneamino] imidazole-4-carboxamide isomerase from Geotalea uraniireducens (strain Rf4) (Geobacter uraniireducens).